The following is a 302-amino-acid chain: uncharacterized protein (302 aa).

The signal sequence occupies residues 1-28; it reads MNKLTAQNLLKKSRFLKYSLLTSISVGA.

This is an uncharacterized protein from Rickettsia prowazekii (strain Madrid E).